The following is a 197-amino-acid chain: Adenylate kinase (197 aa).

An ATP-binding site is contributed by 16–21 (GAGKGT). The NMP stretch occupies residues 36–65 (STGDILRDHVARGTELGQQVKPILDAGHLV). AMP is bound by residues threonine 37, arginine 42, 63 to 65 (HLV), 90 to 93 (GFPR), and glutamine 97. Residues 131–147 (ERGNQAQARGEAVRSDD) form an LID region. Arginine 132 contacts ATP. AMP-binding residues include arginine 144 and arginine 155. Glycine 183 provides a ligand contact to ATP.

Belongs to the adenylate kinase family. In terms of assembly, monomer.

It is found in the cytoplasm. It catalyses the reaction AMP + ATP = 2 ADP. Its pathway is purine metabolism; AMP biosynthesis via salvage pathway; AMP from ADP: step 1/1. Functionally, catalyzes the reversible transfer of the terminal phosphate group between ATP and AMP. Plays an important role in cellular energy homeostasis and in adenine nucleotide metabolism. This is Adenylate kinase from Deinococcus deserti (strain DSM 17065 / CIP 109153 / LMG 22923 / VCD115).